We begin with the raw amino-acid sequence, 297 residues long: Ubiquinone biosynthesis protein COQ4, mitochondrial (297 aa).

Residues 1–54 constitute a mitochondrion transit peptide; it reads MLSSARARLPISLCSFSLPFARLPNTLSRYQETWQRLPGRTHPTRSIRTTPAYE. Positions 178, 179, 182, and 194 each coordinate Zn(2+).

This sequence belongs to the COQ4 family. Component of a multi-subunit COQ enzyme complex, composed of at least COQ3, COQ4, COQ5, COQ6, COQ7 and COQ9. The cofactor is Zn(2+).

The protein localises to the mitochondrion inner membrane. The enzyme catalyses a 4-hydroxy-3-methoxy-5-(all-trans-polyprenyl)benzoate + H(+) = a 2-methoxy-6-(all-trans-polyprenyl)phenol + CO2. Its pathway is cofactor biosynthesis; ubiquinone biosynthesis. Its function is as follows. Lyase that catalyzes the C1-decarboxylation of 4-hydroxy-3-methoxy-5-(all-trans-polyprenyl)benzoic acid into 2-methoxy-6-(all-trans-polyprenyl)phenol during ubiquinone biosynthesis. The protein is Ubiquinone biosynthesis protein COQ4, mitochondrial of Laccaria bicolor (strain S238N-H82 / ATCC MYA-4686) (Bicoloured deceiver).